We begin with the raw amino-acid sequence, 466 residues long: Ribosomal protein uS12 methylthiotransferase RimO (466 aa).

The region spanning 15–125 is the MTTase N-terminal domain; the sequence is PKVGFVSLGC…VMEAVHAALP (111 aa). [4Fe-4S] cluster is bound by residues Cys24, Cys60, Cys89, Cys156, Cys160, and Cys163. One can recognise a Radical SAM core domain in the interval 142 to 380; sequence LTPRHYAYLK…AKQAEISALR (239 aa). One can recognise a TRAM domain in the interval 382–450; it reads EAKIGSVQQC…EHDLFGDALP (69 aa).

This sequence belongs to the methylthiotransferase family. RimO subfamily. Requires [4Fe-4S] cluster as cofactor.

Its subcellular location is the cytoplasm. It carries out the reaction L-aspartate(89)-[ribosomal protein uS12]-hydrogen + (sulfur carrier)-SH + AH2 + 2 S-adenosyl-L-methionine = 3-methylsulfanyl-L-aspartate(89)-[ribosomal protein uS12]-hydrogen + (sulfur carrier)-H + 5'-deoxyadenosine + L-methionine + A + S-adenosyl-L-homocysteine + 2 H(+). Catalyzes the methylthiolation of an aspartic acid residue of ribosomal protein uS12. This Xanthomonas oryzae pv. oryzae (strain MAFF 311018) protein is Ribosomal protein uS12 methylthiotransferase RimO.